The primary structure comprises 373 residues: Flagellar P-ring protein (373 aa).

The signal sequence occupies residues 1–26 (MKLFFRIVTLVAVVAMSLADMAPAWA).

It belongs to the FlgI family. As to quaternary structure, the basal body constitutes a major portion of the flagellar organelle and consists of four rings (L,P,S, and M) mounted on a central rod.

It localises to the periplasm. The protein localises to the bacterial flagellum basal body. Its function is as follows. Assembles around the rod to form the L-ring and probably protects the motor/basal body from shearing forces during rotation. This chain is Flagellar P-ring protein, found in Rhizobium etli (strain ATCC 51251 / DSM 11541 / JCM 21823 / NBRC 15573 / CFN 42).